We begin with the raw amino-acid sequence, 1386 residues long: MLNSLQSGSRLRVDFSKIPQELDVPNLLQLQKSSYENFLMADSKSRENSGIEKVFRSVFPIHDPHNRISLEYAGSEIIKPKYTVRECMERGITYSVSLKMNIRLILWERDEKSGEKTGVKDVKEQSIYVRDIPYMTDRTSFIINGVERVVVNQLHRSPGVIFKEEEASTSSGTMIHTAQIIPDRGAWLYFEYDPKDILYVRINKRRKIPSTILFRALGYSKLDILKLFYPITKIIIKENKFFIEFRPEDFIGRVEFDVRDENGNLIVEAGKRLTKKKAQKLIEEGVKYIEFPLDVLMDRHLASPIIDQESGEVLYDTLTQLDEHKLKKILELGIDEFEIVNDIASGKDRAIINSFIADQESLKLLKQTEGIEDENDLAAIRIYKVMRPGEPVTKETAKAFIQQLFFDPERYDITRVGRMKMNHKLGLDVPEYVTVLTSEDIIKTVQYLIKVKNGQGHIDDRDHLGNRRIRAIGELLANELHSGLVKMQKAIRDKMSTISGSLDELMPHDLINSKMITNTILEFFATGQLSQFMDQTNPLSEITHKRRLSALGEGGLVKERAGFEVRDVHPTHYGRICPIETPEGQNIGLINTLSTYAKVNELGFIEAAYKVVKDGKITDEIVYLTAAQEEGKIIAPANTEIIDGNEIKGDYVEARKDGEIILVEKNKVELIDLTPRMVVGVAASLIPFLEHDDANRALMGSNMQRQAVPLLRTEAPIVGTGMEKVVARDAWESIRARRSGVVEKIDSENIYILGEDENGAYIDHYRLQKNLRTNQNTCFTQKPIVKKGQFVEAGQVITDGPNMDHAELALGKNMLVAFMPWNGYNFEDAIVVSERILRDDEFTSVHIYEKEIEARELKHGVEEITRDIPNVKEEEIEHLDESGIVKIGTYVKPGMILVGKVSPKGEVRPSPEERLLRAIFGEKAGHVVNKSLYCPQSMEGVVVDVKIFTKKGYDKDPRAIKAYEEEKERLSKEHHDKLLMIDREEMLKIISLLSKEPLEKDAKIKDKEFKAGEKISKEELSQINRFALNALVKSYAPEVQKKYNAIKTHFQNEKRKLTEEHEEKLAILEKEDILPSGVVKLVKVFIATKRKLKVGDKMAGRHGNKGIVSVIVPEIDMPYTKDGRIVDIVLNPLGVPSRMNIGQILEVHLGLIGKKLGEQIQEIFEAKRADFVKELRQKMIEIADVAKLMNAKETIEKMSDEELIEYARDWSKGVKFATPVFEGVTAEEFEKLYELAKMDLDGKTELYDGRTGEKFKERVTVGYMYMLKLHHLVDEKVHARSTGPYSLVTQQPVGGKALFGGQRFGEMEVWALEAHGAAHTLKEMLTIKSDDVEGRVAAYKAITKGEPIPQPGIPETLFVLTKELQSLGIDVEILDEVKDDEETGTN.

This sequence belongs to the RNA polymerase beta chain family. The RNAP catalytic core consists of 2 alpha, 1 beta, 1 beta' and 1 omega subunit. When a sigma factor is associated with the core the holoenzyme is formed, which can initiate transcription.

The catalysed reaction is RNA(n) + a ribonucleoside 5'-triphosphate = RNA(n+1) + diphosphate. Functionally, DNA-dependent RNA polymerase catalyzes the transcription of DNA into RNA using the four ribonucleoside triphosphates as substrates. The sequence is that of DNA-directed RNA polymerase subunit beta from Nitratiruptor sp. (strain SB155-2).